A 78-amino-acid polypeptide reads, in one-letter code: Magnetosome protein MamL (78 aa).

Positions 1 to 22 (MVRVIGSLVFGGLILLLASSNA) are cleaved as a signal peptide. The Lumenal segment spans residues 23-38 (HMVETRFGPLIMLAPH). The helical transmembrane segment at 39–59 (FVVLGITFFLGFAIGIVLVFA) threads the bilayer. Topologically, residues 60-78 (NVMKRRKHKLPGKNIVIKR) are cytoplasmic.

It belongs to the magnetosome MamL family.

Its subcellular location is the magnetosome membrane. In terms of biological role, involved in magnetite crystal maturation, but not in magnetosome vesicle tubulation or formation. One of 7 genes (mamLQBIEMO) able to induce magnetosome membrane biogenesis; coexpression of mamLQRBIEMO in a deletion of the 17 gene mamAB operon restores magnetosome vesicle formation but not magnetite biosynthesis. The sequence is that of Magnetosome protein MamL from Magnetospirillum gryphiswaldense (strain DSM 6361 / JCM 21280 / NBRC 15271 / MSR-1).